We begin with the raw amino-acid sequence, 408 residues long: Glutamate N-acetyltransferase (408 aa).

6 residues coordinate substrate: Thr150, Lys176, Thr189, Glu271, Asn403, and Thr408. The active-site Nucleophile is the Thr189.

The protein belongs to the ArgJ family. In terms of assembly, heterotetramer of two alpha and two beta chains.

The protein localises to the cytoplasm. The enzyme catalyses N(2)-acetyl-L-ornithine + L-glutamate = N-acetyl-L-glutamate + L-ornithine. It participates in amino-acid biosynthesis; L-arginine biosynthesis; L-ornithine and N-acetyl-L-glutamate from L-glutamate and N(2)-acetyl-L-ornithine (cyclic): step 1/1. In terms of biological role, catalyzes the transfer of the acetyl group from N(2)-acetylornithine to glutamate, forming N-acetylglutamate and L-ornithine. The polypeptide is Glutamate N-acetyltransferase (Methanococcus maripaludis (strain DSM 14266 / JCM 13030 / NBRC 101832 / S2 / LL)).